The sequence spans 256 residues: Pimeloyl-[acyl-carrier protein] methyl ester esterase (256 aa).

The 228-residue stretch at 15 to 242 (HLVLLHGWGL…AAHAPFISHP (228 aa)) folds into the AB hydrolase-1 domain. Substrate is bound by residues Trp22, 82–83 (SL), and 143–147 (FLALQ). Ser82 functions as the Nucleophile in the catalytic mechanism. Residues Asp207 and His235 contribute to the active site. Residue His235 coordinates substrate.

This sequence belongs to the AB hydrolase superfamily. Carboxylesterase BioH family. Monomer.

It is found in the cytoplasm. It catalyses the reaction 6-carboxyhexanoyl-[ACP] methyl ester + H2O = 6-carboxyhexanoyl-[ACP] + methanol + H(+). The protein operates within cofactor biosynthesis; biotin biosynthesis. The physiological role of BioH is to remove the methyl group introduced by BioC when the pimeloyl moiety is complete. It allows to synthesize pimeloyl-ACP via the fatty acid synthetic pathway through the hydrolysis of the ester bonds of pimeloyl-ACP esters. This chain is Pimeloyl-[acyl-carrier protein] methyl ester esterase, found in Escherichia coli (strain K12 / MC4100 / BW2952).